Here is a 174-residue protein sequence, read N- to C-terminus: Shikimate kinase (174 aa).

Position 10 to 15 (10 to 15) interacts with ATP; the sequence is GSGKTA. Threonine 14 provides a ligand contact to Mg(2+). Residues aspartate 32, arginine 56, and glycine 78 each coordinate substrate. Arginine 118 contacts ATP. Arginine 137 is a binding site for substrate. Arginine 154 contacts ATP.

Belongs to the shikimate kinase family. In terms of assembly, monomer. Mg(2+) serves as cofactor.

The protein resides in the cytoplasm. The enzyme catalyses shikimate + ATP = 3-phosphoshikimate + ADP + H(+). The protein operates within metabolic intermediate biosynthesis; chorismate biosynthesis; chorismate from D-erythrose 4-phosphate and phosphoenolpyruvate: step 5/7. Its function is as follows. Catalyzes the specific phosphorylation of the 3-hydroxyl group of shikimic acid using ATP as a cosubstrate. The polypeptide is Shikimate kinase (Symbiobacterium thermophilum (strain DSM 24528 / JCM 14929 / IAM 14863 / T)).